The chain runs to 246 residues: Probable transcriptional regulatory protein SPO1072 (246 aa).

Positions 1–22 (MAGHSKWANIQHRKGRQDAARS) are disordered.

The protein belongs to the TACO1 family.

It is found in the cytoplasm. In Ruegeria pomeroyi (strain ATCC 700808 / DSM 15171 / DSS-3) (Silicibacter pomeroyi), this protein is Probable transcriptional regulatory protein SPO1072.